Reading from the N-terminus, the 263-residue chain is MQPRVTTTTLFKMKQEGKRITALTAYDHPFATLVDAAGIDIILVGDSLGMVVQGKQTTLPVTMDEILYHTAMVTRACNRAMVVGDMPFMSYQSSINQAVDNAGRFLKEADASAVKLEGGADVCPVIQAIAKAGIPVQAHIGLTPQSVHQMGGFRVQRDEERLVSDALKVQDAGAFSVVLEGIPSDIAGIITKKLDIPTIGIGAGPGCDGQILVLHDMLGLHDRHLPKFVRQFADLRTQAARGLEQYRDAVRNGSFPAEEHGYK.

Residues aspartate 46 and aspartate 85 each coordinate Mg(2+). 3-methyl-2-oxobutanoate-binding positions include 46–47 (DS), aspartate 85, and lysine 115. A Mg(2+)-binding site is contributed by glutamate 117. The active-site Proton acceptor is the glutamate 180.

It belongs to the PanB family. In terms of assembly, homodecamer; pentamer of dimers. It depends on Mg(2+) as a cofactor.

Its subcellular location is the cytoplasm. It carries out the reaction 3-methyl-2-oxobutanoate + (6R)-5,10-methylene-5,6,7,8-tetrahydrofolate + H2O = 2-dehydropantoate + (6S)-5,6,7,8-tetrahydrofolate. The protein operates within cofactor biosynthesis; (R)-pantothenate biosynthesis; (R)-pantoate from 3-methyl-2-oxobutanoate: step 1/2. In terms of biological role, catalyzes the reversible reaction in which hydroxymethyl group from 5,10-methylenetetrahydrofolate is transferred onto alpha-ketoisovalerate to form ketopantoate. This Desulforapulum autotrophicum (strain ATCC 43914 / DSM 3382 / VKM B-1955 / HRM2) (Desulfobacterium autotrophicum) protein is 3-methyl-2-oxobutanoate hydroxymethyltransferase.